The chain runs to 194 residues: Probable chorismate pyruvate-lyase (194 aa).

Residues arginine 77, leucine 115, and glutamate 176 each contribute to the substrate site.

This sequence belongs to the UbiC family.

The protein localises to the cytoplasm. The catalysed reaction is chorismate = 4-hydroxybenzoate + pyruvate. The protein operates within cofactor biosynthesis; ubiquinone biosynthesis. Removes the pyruvyl group from chorismate, with concomitant aromatization of the ring, to provide 4-hydroxybenzoate (4HB) for the ubiquinone pathway. This chain is Probable chorismate pyruvate-lyase, found in Cupriavidus pinatubonensis (strain JMP 134 / LMG 1197) (Cupriavidus necator (strain JMP 134)).